Consider the following 245-residue polypeptide: Thiopurine S-methyltransferase (245 aa).

An S-adenosyl-L-methionine-binding site is contributed by 29 to 40; sequence WREKWVDGKIGF. F40 provides a ligand contact to substrate. An N6-acetyllysine modification is found at K58. S-adenosyl-L-methionine is bound by residues L69, E90, and R152.

Belongs to the class I-like SAM-binding methyltransferase superfamily. TPMT family. As to quaternary structure, monomer.

It is found in the cytoplasm. The catalysed reaction is S-adenosyl-L-methionine + a thiopurine = S-adenosyl-L-homocysteine + a thiopurine S-methylether.. The chain is Thiopurine S-methyltransferase (TPMT) from Felis catus (Cat).